The following is a 193-amino-acid chain: Inner membrane-spanning protein YciB (193 aa).

Helical transmembrane passes span 5–25 (TLDAIKPFLDWIPLIVFFYIY), 36–56 (IIAATTGLLIATLIVYGLMFV), 67–87 (WLVVVLTVVFGGLTMAFQDDF), 93–113 (APIINAVFAFGLAMSPLFLGG), 138–158 (VWVGFFTLMAVLQALFAFVWV), and 164–184 (FTAFGDMIVMVVFMVAQFWFL).

The protein belongs to the YciB family.

Its subcellular location is the cell inner membrane. Its function is as follows. Plays a role in cell envelope biogenesis, maintenance of cell envelope integrity and membrane homeostasis. This chain is Inner membrane-spanning protein YciB, found in Vitreoscilla sp. (strain C1).